The sequence spans 463 residues: MALRLYDTLTKEKRDFAPLDPSRVRMYVCGPTVYDFAHIGNARPVIVFDVLFRLLRHLYGENHVKYVRNITDVDDKINDRAARDYPGLPLNESIRKVTEQTERQFHDDVDALGCLRPTVEPRATEHIGEMRTIIDRLVEGGFAYVADDHVLFSPGAMNAADSVLPRYGALANRSLDEMIAGARVDVAPYKRDATDFVLWKPSKPGEPSWPSPAGIATQGRPGWHIECSAMSWKHLGETFDIHGGGIDLVFPHHENEVAQSCCAFHTSRMAQTWMHNGFLQVEGEKMSKSLGNFVTIRELLATEKFGGRKWDGATLRLAMLKTHYRQPIDWTADALHEAEKAIFDWSDFTKDATPGSCDDVIAALTDDLNTPKMIAELHALRRAGKADELCGAMELLGISPVVRGTVDLDATAKSLIDARTAARARKDFKESDRIRDELAAMGIAIKDGKDSDGKPVTTWEIAR.

Residue Cys-29 participates in Zn(2+) binding. The 'HIGH' region signature appears at Pro-31–Asn-41. Positions 227, 252, and 256 each coordinate Zn(2+). Positions Lys-285–Ser-289 match the 'KMSKS' region motif. Lys-288 lines the ATP pocket.

Belongs to the class-I aminoacyl-tRNA synthetase family. As to quaternary structure, monomer. It depends on Zn(2+) as a cofactor.

The protein localises to the cytoplasm. The enzyme catalyses tRNA(Cys) + L-cysteine + ATP = L-cysteinyl-tRNA(Cys) + AMP + diphosphate. The polypeptide is Cysteine--tRNA ligase (Rhodopseudomonas palustris (strain BisB5)).